The following is a 1112-amino-acid chain: Cytosolic carboxypeptidase 4 (1112 aa).

The segment at 291-345 is disordered; it reads TTEPPHDLPEEDFEDDGDDEVDKDSDTEDGKVEDDDLETDVNKLSSKPGLDRPEE. A compositionally biased stretch (acidic residues) spans 299 to 329; the sequence is PEEDFEDDGDDEVDKDSDTEDGKVEDDDLET. The Peptidase M14 domain occupies 732-1022; the sequence is YPYTYTALMT…HPVDGLQGLQ (291 aa). Zn(2+) contacts are provided by His-804, Glu-807, and His-901. The active-site Proton donor/acceptor is the Glu-986.

Belongs to the peptidase M14 family. In terms of assembly, interacts with MYLK. Interacts with TCF4. Zn(2+) serves as cofactor. As to expression, expressed in corneal endothelium.

It localises to the cytoplasm. It is found in the cytosol. The enzyme catalyses (L-glutamyl)(n+1)-gamma-L-glutamyl-L-glutamyl-[protein] + H2O = (L-glutamyl)(n)-gamma-L-glutamyl-L-glutamyl-[protein] + L-glutamate. It catalyses the reaction C-terminal L-alpha-aminoacyl-L-glutamyl-L-glutamyl-[tubulin] + H2O = C-terminal L-alpha-aminoacyl-L-glutamyl-[tubulin] + L-glutamate. Metallocarboxypeptidase that mediates deglutamylation of tubulin and non-tubulin target proteins. Catalyzes the removal of polyglutamate side chains present on the gamma-carboxyl group of glutamate residues within the C-terminal tail of tubulin protein. Specifically cleaves tubulin long-side-chains, while it is not able to remove the branching point glutamate. Also catalyzes the removal of polyglutamate residues from the carboxy-terminus of non-tubulin proteins such as MYLK. The polypeptide is Cytosolic carboxypeptidase 4 (Homo sapiens (Human)).